The chain runs to 222 residues: Cytidylate kinase (222 aa).

Glycine 9 to threonine 17 provides a ligand contact to ATP.

It belongs to the cytidylate kinase family. Type 1 subfamily.

It localises to the cytoplasm. The catalysed reaction is CMP + ATP = CDP + ADP. It carries out the reaction dCMP + ATP = dCDP + ADP. The sequence is that of Cytidylate kinase from Thermodesulfovibrio yellowstonii (strain ATCC 51303 / DSM 11347 / YP87).